Consider the following 344-residue polypeptide: Fructose-bisphosphate aldolase (344 aa).

Residue serine 53 participates in D-glyceraldehyde 3-phosphate binding. Aspartate 95 acts as the Proton donor in catalysis. Residues histidine 96, aspartate 131, glutamate 161, and histidine 212 each coordinate Zn(2+). A dihydroxyacetone phosphate-binding site is contributed by glycine 213. Zn(2+) is bound at residue histidine 252. Residues 253–255 and 274–277 each bind dihydroxyacetone phosphate; these read GGS and NVDT.

The protein belongs to the class II fructose-bisphosphate aldolase family. Zn(2+) is required as a cofactor.

It carries out the reaction beta-D-fructose 1,6-bisphosphate = D-glyceraldehyde 3-phosphate + dihydroxyacetone phosphate. It functions in the pathway carbohydrate degradation; glycolysis; D-glyceraldehyde 3-phosphate and glycerone phosphate from D-glucose: step 4/4. In terms of biological role, catalyzes the aldol condensation of dihydroxyacetone phosphate (DHAP or glycerone-phosphate) with glyceraldehyde 3-phosphate (G3P) to form fructose 1,6-bisphosphate (FBP) in gluconeogenesis and the reverse reaction in glycolysis. This Mycobacterium bovis (strain ATCC BAA-935 / AF2122/97) protein is Fructose-bisphosphate aldolase (fba).